The chain runs to 457 residues: Siroheme synthase (457 aa).

A precorrin-2 dehydrogenase /sirohydrochlorin ferrochelatase region spans residues 1–204 (MDHLPIFCQL…ADEKAVNATT (204 aa)). NAD(+) contacts are provided by residues 22 to 23 (DV) and 43 to 44 (LT). Ser-128 carries the phosphoserine modification. The uroporphyrinogen-III C-methyltransferase stretch occupies residues 216–457 (GEVVLVGAGP…RDKLNWFSSH (242 aa)). S-adenosyl-L-methionine is bound at residue Pro-225. Residue Asp-248 is the Proton acceptor of the active site. Lys-270 functions as the Proton donor in the catalytic mechanism. S-adenosyl-L-methionine-binding positions include 301 to 303 (GGD), Ile-306, 331 to 332 (TA), Met-382, and Gly-411.

In the N-terminal section; belongs to the precorrin-2 dehydrogenase / sirohydrochlorin ferrochelatase family. It in the C-terminal section; belongs to the precorrin methyltransferase family.

It carries out the reaction uroporphyrinogen III + 2 S-adenosyl-L-methionine = precorrin-2 + 2 S-adenosyl-L-homocysteine + H(+). The catalysed reaction is precorrin-2 + NAD(+) = sirohydrochlorin + NADH + 2 H(+). It catalyses the reaction siroheme + 2 H(+) = sirohydrochlorin + Fe(2+). It participates in cofactor biosynthesis; adenosylcobalamin biosynthesis; precorrin-2 from uroporphyrinogen III: step 1/1. The protein operates within cofactor biosynthesis; adenosylcobalamin biosynthesis; sirohydrochlorin from precorrin-2: step 1/1. It functions in the pathway porphyrin-containing compound metabolism; siroheme biosynthesis; precorrin-2 from uroporphyrinogen III: step 1/1. Its pathway is porphyrin-containing compound metabolism; siroheme biosynthesis; siroheme from sirohydrochlorin: step 1/1. It participates in porphyrin-containing compound metabolism; siroheme biosynthesis; sirohydrochlorin from precorrin-2: step 1/1. Multifunctional enzyme that catalyzes the SAM-dependent methylations of uroporphyrinogen III at position C-2 and C-7 to form precorrin-2 via precorrin-1. Then it catalyzes the NAD-dependent ring dehydrogenation of precorrin-2 to yield sirohydrochlorin. Finally, it catalyzes the ferrochelation of sirohydrochlorin to yield siroheme. The chain is Siroheme synthase from Salmonella arizonae (strain ATCC BAA-731 / CDC346-86 / RSK2980).